A 316-amino-acid chain; its full sequence is MVVMPPQNSVNESEGRYLQDGFWQHGRFYGSWKPGKYLFPIDSEELNRLDIFHKVFLLARDNKPFLAPIRRTSPRIMDIGTGTGIWAINVAEECLSDAQIMAVDLNQIQPALIPPGFMPKQYDIEEPSWGPLLADCDLIHMRMLLGSIQTDLWPQVYHNAFEHLTPGIGFLEHIEVDWIPRCDDDERPANSAFVKWAELFLDGMDRFNRSVRVIPQEHRQMLEATGFTDVKQEVIKAYVCPWSADRNEREIARWFNIGLSHSLEAMSLKPLIEKLGFEAEDVRELCERAKRETCVLRYHTYCNIHVWTARKPGPQQ.

It belongs to the methyltransferase superfamily. LaeA methyltransferase family. As to quaternary structure, component of the heterotrimeric velvet complex composed of LAE1, VEL1 and VEL2; VEL1 acting as a bridging protein between LAE1 and VEL2. Interacts with VEL1.

Its subcellular location is the nucleus. The enzyme catalyses L-methionyl-[protein] + S-adenosyl-L-methionine = S-methyl-L-methionyl-[protein] + S-adenosyl-L-homocysteine. Functionally, methyltransferase that performs automethylation. No other methyl-accepting substrate has been identified yet. Component of the velvet transcription factor complex that acts as a global regulator for secondary metabolite gene expression. Controls the expression of the gibberellins gene clusters, but does not affect bikaverin production. Controls the expression of the fusaric acid gene cluster. Acts as a virulence factors during infection, most likely through activation of gibberellins biosynthesis. In Gibberella fujikuroi (strain CBS 195.34 / IMI 58289 / NRRL A-6831) (Bakanae and foot rot disease fungus), this protein is Secondary metabolism regulator LAE1.